A 180-amino-acid chain; its full sequence is MVVEVLRLGHRWGRDKRISTHVALTSRALGADKILFVSNDDHVKDSVNRIVEQWGGDFKFDVVDSWKQYIWSFKKNNGIVIHLTMYGENINEIMKKIIEKRQEGKDSKNILIIIGAEKVPKEAYELADYNVSVGNQPHSEVAAIAILLDRLFEGSSLYKEYPDAKIKVNPSDRYKSVEIR.

S-adenosyl-L-methionine contacts are provided by residues Leu83, 115–119, and 133–140; these read GAEKV and VGNQPHSE.

This sequence belongs to the aTrm56 family. Homodimer.

Its subcellular location is the cytoplasm. It catalyses the reaction cytidine(56) in tRNA + S-adenosyl-L-methionine = 2'-O-methylcytidine(56) in tRNA + S-adenosyl-L-homocysteine + H(+). Its function is as follows. Specifically catalyzes the AdoMet-dependent 2'-O-ribose methylation of cytidine at position 56 in tRNAs. The chain is tRNA (cytidine(56)-2'-O)-methyltransferase from Methanococcus aeolicus (strain ATCC BAA-1280 / DSM 17508 / OCM 812 / Nankai-3).